The primary structure comprises 246 residues: Bis(5'-nucleosyl)-tetraphosphatase PrpE [asymmetrical] (246 aa).

Belongs to the PrpE family. The cofactor is Ni(2+).

It catalyses the reaction P(1),P(4)-bis(5'-guanosyl) tetraphosphate + H2O = GMP + GTP + 2 H(+). In terms of biological role, asymmetrically hydrolyzes Ap4p to yield AMP and ATP. This Bacillus cereus (strain ATCC 10987 / NRS 248) protein is Bis(5'-nucleosyl)-tetraphosphatase PrpE [asymmetrical].